Reading from the N-terminus, the 65-residue chain is Large ribosomal subunit protein bL35 (65 aa).

Belongs to the bacterial ribosomal protein bL35 family.

This Thermotoga neapolitana (strain ATCC 49049 / DSM 4359 / NBRC 107923 / NS-E) protein is Large ribosomal subunit protein bL35.